We begin with the raw amino-acid sequence, 254 residues long: UPF0246 protein Fphi_1075 (254 aa).

This sequence belongs to the UPF0246 family.

The sequence is that of UPF0246 protein Fphi_1075 from Francisella philomiragia subsp. philomiragia (strain ATCC 25017 / CCUG 19701 / FSC 153 / O#319-036).